Consider the following 500-residue polypeptide: Probable cytosol aminopeptidase (500 aa).

Mn(2+) is bound by residues Lys-261 and Asp-266. Residue Lys-273 is part of the active site. Asp-284, Asp-343, and Glu-345 together coordinate Mn(2+). The active site involves Arg-347.

This sequence belongs to the peptidase M17 family. Mn(2+) is required as a cofactor.

Its subcellular location is the cytoplasm. The enzyme catalyses Release of an N-terminal amino acid, Xaa-|-Yaa-, in which Xaa is preferably Leu, but may be other amino acids including Pro although not Arg or Lys, and Yaa may be Pro. Amino acid amides and methyl esters are also readily hydrolyzed, but rates on arylamides are exceedingly low.. The catalysed reaction is Release of an N-terminal amino acid, preferentially leucine, but not glutamic or aspartic acids.. In terms of biological role, presumably involved in the processing and regular turnover of intracellular proteins. Catalyzes the removal of unsubstituted N-terminal amino acids from various peptides. The protein is Probable cytosol aminopeptidase of Wolbachia pipientis wMel.